The chain runs to 113 residues: Protein FPV195 (113 aa).

This sequence belongs to the poxviruses A31 family.

This Vertebrata (FPV) protein is Protein FPV195.